The sequence spans 299 residues: 4-diphosphocytidyl-2-C-methyl-D-erythritol kinase (299 aa).

The active site involves Lys17. Residue 103-113 (PVASGIGGGSG) participates in ATP binding. The active site involves Asp145.

The protein belongs to the GHMP kinase family. IspE subfamily.

The enzyme catalyses 4-CDP-2-C-methyl-D-erythritol + ATP = 4-CDP-2-C-methyl-D-erythritol 2-phosphate + ADP + H(+). The protein operates within isoprenoid biosynthesis; isopentenyl diphosphate biosynthesis via DXP pathway; isopentenyl diphosphate from 1-deoxy-D-xylulose 5-phosphate: step 3/6. In terms of biological role, catalyzes the phosphorylation of the position 2 hydroxy group of 4-diphosphocytidyl-2C-methyl-D-erythritol. In Bartonella tribocorum (strain CIP 105476 / IBS 506), this protein is 4-diphosphocytidyl-2-C-methyl-D-erythritol kinase.